The sequence spans 444 residues: 23S rRNA (uracil(1939)-C(5))-methyltransferase RlmD (444 aa).

Positions 5 to 67 (RNRLDRTPFQ…RHFDEAKTVG (63 aa)) constitute a TRAM domain. [4Fe-4S] cluster-binding residues include Cys-80, Cys-86, Cys-89, and Cys-168. Gln-276, Phe-305, Asn-310, Glu-326, Asp-353, and Asp-374 together coordinate S-adenosyl-L-methionine. Cys-400 serves as the catalytic Nucleophile.

This sequence belongs to the class I-like SAM-binding methyltransferase superfamily. RNA M5U methyltransferase family. RlmD subfamily.

It catalyses the reaction uridine(1939) in 23S rRNA + S-adenosyl-L-methionine = 5-methyluridine(1939) in 23S rRNA + S-adenosyl-L-homocysteine + H(+). Catalyzes the formation of 5-methyl-uridine at position 1939 (m5U1939) in 23S rRNA. The protein is 23S rRNA (uracil(1939)-C(5))-methyltransferase RlmD of Xanthomonas axonopodis pv. citri (strain 306).